The following is a 183-amino-acid chain: Ras-like protein (183 aa).

Residue glycine 10 to serine 17 coordinates GTP. The Effector region motif lies at tyrosine 32–tyrosine 40. Residues aspartate 57 to glutamine 61 and asparagine 116 to aspartate 119 contribute to the GTP site.

Belongs to the small GTPase superfamily. Ras family.

It localises to the cell membrane. The catalysed reaction is GTP + H2O = GDP + phosphate + H(+). With respect to regulation, alternates between an inactive form bound to GDP and an active form bound to GTP. Activated by a guanine nucleotide-exchange factor (GEF) and inactivated by a GTPase-activating protein (GAP). Functionally, ras proteins bind GDP/GTP and possess intrinsic GTPase activity. The protein is Ras-like protein of Carassius auratus (Goldfish).